The sequence spans 412 residues: uncharacterized protein (412 aa).

A compositionally biased stretch (polar residues) spans 1–17 (MPSQGNNKNSENITQNP). 3 disordered regions span residues 1–20 (MPSQ…PIEG), 223–243 (EQAV…ARQT), and 310–412 (QKQM…NPVA). The segment covering 340 to 355 (KLNSNTRGSSKRPSVN) has biased composition (polar residues). Over residues 361-379 (GQRGRGGRGFYRGGRGRGG) the composition is skewed to gly residues. A compositionally biased stretch (low complexity) spans 390–402 (SNSNNSTSQPSPN). Residues 403-412 (AELSNFNPVA) show a composition bias toward polar residues.

This is an uncharacterized protein from Schizosaccharomyces pombe (strain 972 / ATCC 24843) (Fission yeast).